The primary structure comprises 171 residues: Phosphopantetheine adenylyltransferase (171 aa).

Residue threonine 9 coordinates substrate. ATP contacts are provided by residues 9–10 and histidine 17; that span reads TF. Residues lysine 41, leucine 73, and arginine 87 each contribute to the substrate site. Residues 88–90, glutamate 98, and 123–129 each bind ATP; these read GLR and YQFISGT.

Belongs to the bacterial CoaD family. In terms of assembly, homohexamer. Mg(2+) serves as cofactor.

It localises to the cytoplasm. It catalyses the reaction (R)-4'-phosphopantetheine + ATP + H(+) = 3'-dephospho-CoA + diphosphate. Its pathway is cofactor biosynthesis; coenzyme A biosynthesis; CoA from (R)-pantothenate: step 4/5. Functionally, reversibly transfers an adenylyl group from ATP to 4'-phosphopantetheine, yielding dephospho-CoA (dPCoA) and pyrophosphate. This Paraburkholderia phytofirmans (strain DSM 17436 / LMG 22146 / PsJN) (Burkholderia phytofirmans) protein is Phosphopantetheine adenylyltransferase.